Reading from the N-terminus, the 255-residue chain is RNA polymerase sigma-F factor (255 aa).

The Polymerase core binding signature appears at 61-74; that stretch reads DLFQIGCIGLLKSV. The segment at residues 221 to 240 is a DNA-binding region (H-T-H motif); the sequence is QSEVAERLGISQVQVSRLEK.

Belongs to the sigma-70 factor family. In terms of assembly, interacts transiently with the RNAP core.

Interaction with SpoIIAB inhibits sigma-F activity throughout the cell before the formation of the asymmetric septum; after septation the interaction is confined to the mother cell, and sigma-F activity is released in the prespore. Fin, a second, forespore-specific anti-sigma factor is induced in 2 successive waves by sigma-F and sigma-G, by antagonizing sigma-F it allows the switch to sigma-G factor and progression to the late sporulation development stages. Functionally, sigma factors are initiation factors that promote the attachment of RNA polymerase to specific initiation sites and are then released. This sigma factor is responsible for the expression of sporulation specific genes. Interaction with SpoIIAB inhibits sigma-F activity throughout the cell before the formation of the asymmetric septum; after septation the interaction is confined to the mother cell, and sigma F activity is released in the prespore. Responsible for expression of csfB (the anti-sigma-G factor Gin). Associates with the RNAP core only in stationary phase cells. This chain is RNA polymerase sigma-F factor (sigF), found in Bacillus subtilis (strain 168).